We begin with the raw amino-acid sequence, 518 residues long: Cytochrome P450 monooxygenase psoD (518 aa).

Cysteine 442 provides a ligand contact to heme.

It belongs to the cytochrome P450 family. Heme serves as cofactor.

The protein operates within secondary metabolite biosynthesis. In terms of biological role, cytochrome P450 monooxygenase; part of the gene cluster that mediates the biosynthesis of pseurotin A, a competitive inhibitor of chitin synthase and an inducer of nerve-cell proliferation. The PKS-NRPS hybrid synthetase psoA is responsible for the biosynthesis of azaspirene, one of the first intermediates having the 1-oxa-7-azaspiro[4,4]-non-2-ene-4,6-dione core of pseurotin, via condensation of one acetyl-CoA, 4 malonyl-CoA, and a L-phenylalanine molecule. The dual-functional monooxygenase/methyltransferase psoF seems to be involved in the addition of the C3 methyl group onto the pseurotin scaffold. Azaspirene is then converted to synerazol through 4 steps including oxidation of C17 by the cytochrome P450 monooxygenase psoD, O-methylation of the hydroxy group of C8 by the methyltransferase psoC, and the trans-to-cis isomerization of the C13 olefin by the glutathione S-transferase psoE. The fourth step of synerazol production is performed by the dual-functional monooxygenase/methyltransferase psoF which seems to catalyze the epoxidation of the intermediate deepoxy-synerazol. Synerazol can be attacked by a water molecule nonenzymatically at two different positions to yield two diol products, pseurotin A and pseurotin D. The polypeptide is Cytochrome P450 monooxygenase psoD (Aspergillus fumigatus (strain ATCC MYA-4609 / CBS 101355 / FGSC A1100 / Af293) (Neosartorya fumigata)).